A 556-amino-acid polypeptide reads, in one-letter code: Small ribosomal subunit protein bS1 (556 aa).

6 S1 motif domains span residues 35-105 (TIKE…ISQQ), 120-183 (NAII…ISRK), 204-272 (TEPV…LSIK), 289-359 (GYAI…VSLK), 377-444 (DVLE…LSAK), and 461-525 (DSVI…ASVH).

Belongs to the bacterial ribosomal protein bS1 family.

In terms of biological role, binds mRNA; thus facilitating recognition of the initiation point. It is needed to translate mRNA with a short Shine-Dalgarno (SD) purine-rich sequence. This chain is Small ribosomal subunit protein bS1 (rpsA), found in Helicobacter pylori (strain ATCC 700392 / 26695) (Campylobacter pylori).